Here is a 562-residue protein sequence, read N- to C-terminus: NAD-dependent malic enzyme (562 aa).

Tyr-101 acts as the Proton donor in catalysis. Arg-154 is a binding site for NAD(+). Lys-172 serves as the catalytic Proton acceptor. Residues Glu-243, Asp-244, and Asp-267 each contribute to the a divalent metal cation site. 2 residues coordinate NAD(+): Asp-267 and Asn-415.

It belongs to the malic enzymes family. In terms of assembly, homotetramer. Mg(2+) is required as a cofactor. Mn(2+) serves as cofactor.

It carries out the reaction (S)-malate + NAD(+) = pyruvate + CO2 + NADH. The catalysed reaction is oxaloacetate + H(+) = pyruvate + CO2. The sequence is that of NAD-dependent malic enzyme from Aliivibrio fischeri (strain ATCC 700601 / ES114) (Vibrio fischeri).